A 106-amino-acid polypeptide reads, in one-letter code: Large ribosomal subunit protein uL24 (106 aa).

It belongs to the universal ribosomal protein uL24 family. Part of the 50S ribosomal subunit.

Functionally, one of two assembly initiator proteins, it binds directly to the 5'-end of the 23S rRNA, where it nucleates assembly of the 50S subunit. One of the proteins that surrounds the polypeptide exit tunnel on the outside of the subunit. This chain is Large ribosomal subunit protein uL24, found in Acidithiobacillus ferrooxidans (strain ATCC 53993 / BNL-5-31) (Leptospirillum ferrooxidans (ATCC 53993)).